The primary structure comprises 423 residues: Glucose-1-phosphate adenylyltransferase 1 (423 aa).

Alpha-D-glucose 1-phosphate contacts are provided by residues Y111, G176, 191 to 192, and S209; that span reads EK.

Belongs to the bacterial/plant glucose-1-phosphate adenylyltransferase family. In terms of assembly, homotetramer.

It catalyses the reaction alpha-D-glucose 1-phosphate + ATP + H(+) = ADP-alpha-D-glucose + diphosphate. It functions in the pathway glycan biosynthesis; glycogen biosynthesis. Involved in the biosynthesis of ADP-glucose, a building block required for the elongation reactions to produce glycogen. Catalyzes the reaction between ATP and alpha-D-glucose 1-phosphate (G1P) to produce pyrophosphate and ADP-Glc. The chain is Glucose-1-phosphate adenylyltransferase 1 from Alkalilimnicola ehrlichii (strain ATCC BAA-1101 / DSM 17681 / MLHE-1).